A 1017-amino-acid chain; its full sequence is Anaphase-promoting complex subunit 5 (1017 aa).

TPR repeat units follow at residues 30-63 (KQSLSHLLIRHIKENNYQDTVKEVSLYDFIEKEL), 182-214 (DMSMDQEQQQQQQEDYNEISNYENKIKFLSPLD), 252-286 (VKRVHLISLLFNIGYQDYDQSLEDLHRYFDYVNGQ), 337-370 (PYAVLNLVRLHYHFGHYEESYLALREAIRIAQER), and 508-541 (NNNNNNNNNNNSSNSNNNGGVNMFGKSFHLWNDI). Over residues 451–525 (INSNNYNSNN…NNNSSNSNNN (75 aa)) the composition is skewed to low complexity. 2 disordered regions span residues 451–527 (INSN…NNGG) and 617–636 (NNNNNNNNNNNQIKQQQQQN). TPR repeat units lie at residues 642 to 675 (LLSFCKLALLYSKKSKYNEAIQILIKCFSIYKTQ), 756 to 790 (VICYQKIIKYYCNVRGMYEKSMNLIVKGIQISRDF), 838 to 871 (ADSNIALIKIHLSTDRLDKAITLIKETLPMVLSD), 876 to 908 (SQLYLLWAKSLISTSTKQSIDYLNRSEQLFLQL), and 931 to 964 (KEIYYLKSIIYNDLGDIENRNLYAKKFKSILVPS).

This sequence belongs to the APC5 family. The APC/C is composed of at least 13 subunits that stay tightly associated throughout the cell cycle: anapc1, anapc2, anapc3, anapc4, anapc5, anapc6, anapc7, anapc8, anapc10, anapc11, cdc20, cdc26 and cdh1.

It localises to the nucleus. It functions in the pathway protein modification; protein ubiquitination. In terms of biological role, component of the anaphase promoting complex/cyclosome (APC/C), a cell cycle-regulated E3 ubiquitin-protein ligase complex that controls progression through mitosis and the G1 phase of the cell cycle. In Dictyostelium discoideum (Social amoeba), this protein is Anaphase-promoting complex subunit 5 (anapc5).